The chain runs to 340 residues: Undecaprenyl-phosphate 4-deoxy-4-formamido-L-arabinose transferase (340 aa).

Transmembrane regions (helical) follow at residues Leu-235–Phe-255 and Leu-269–Leu-289.

It belongs to the glycosyltransferase 2 family.

The protein resides in the cell inner membrane. It catalyses the reaction UDP-4-deoxy-4-formamido-beta-L-arabinose + di-trans,octa-cis-undecaprenyl phosphate = 4-deoxy-4-formamido-alpha-L-arabinopyranosyl di-trans,octa-cis-undecaprenyl phosphate + UDP. It functions in the pathway glycolipid biosynthesis; 4-amino-4-deoxy-alpha-L-arabinose undecaprenyl phosphate biosynthesis; 4-amino-4-deoxy-alpha-L-arabinose undecaprenyl phosphate from UDP-4-deoxy-4-formamido-beta-L-arabinose and undecaprenyl phosphate: step 1/2. It participates in bacterial outer membrane biogenesis; lipopolysaccharide biosynthesis. Its function is as follows. Catalyzes the transfer of 4-deoxy-4-formamido-L-arabinose from UDP to undecaprenyl phosphate. The modified arabinose is attached to lipid A and is required for resistance to polymyxin and cationic antimicrobial peptides. The protein is Undecaprenyl-phosphate 4-deoxy-4-formamido-L-arabinose transferase of Pseudomonas fluorescens (strain Pf0-1).